The following is a 307-amino-acid chain: Fructose-bisphosphate aldolase (307 aa).

S49 contacts D-glyceraldehyde 3-phosphate. The active-site Proton donor is D82. The Zn(2+) site is built by H83, D104, E134, and H180. A dihydroxyacetone phosphate-binding site is contributed by G181. H210 lines the Zn(2+) pocket. Dihydroxyacetone phosphate is bound by residues 211–213 (GAS) and 253–256 (NTDT).

This sequence belongs to the class II fructose-bisphosphate aldolase family. Homodimer. The cofactor is Zn(2+).

It catalyses the reaction beta-D-fructose 1,6-bisphosphate = D-glyceraldehyde 3-phosphate + dihydroxyacetone phosphate. The protein operates within carbohydrate degradation; glycolysis; D-glyceraldehyde 3-phosphate and glycerone phosphate from D-glucose: step 4/4. Catalyzes the aldol condensation of dihydroxyacetone phosphate (DHAP or glycerone-phosphate) with glyceraldehyde 3-phosphate (G3P) to form fructose 1,6-bisphosphate (FBP) in gluconeogenesis and the reverse reaction in glycolysis. The polypeptide is Fructose-bisphosphate aldolase (fba) (Helicobacter pylori (strain ATCC 700392 / 26695) (Campylobacter pylori)).